The chain runs to 178 residues: Endothelin-2 (178 aa).

An N-terminal signal peptide occupies residues 1–24 (MVSVPTAWCSVALALLVALHEGKD). Positions 25-46 (QAAATLEQPASSPRARAAHLRL) are excised as a propeptide. Intrachain disulfides connect Cys49/Cys63 and Cys51/Cys59. A propeptide spanning residues 70–178 (VNTPGQTAPY…RTTHSRHRKR (109 aa)) is cleaved from the precursor. The interval 96–111 (CECSSARDPACATFCH) is endothelin-like. Residues 154-178 (KTHFAKRQQEATREPRTTHSRHRKR) form a disordered region. A compositionally biased stretch (basic and acidic residues) spans 160–170 (RQQEATREPRT).

It belongs to the endothelin/sarafotoxin family.

Its subcellular location is the secreted. Its function is as follows. Endothelins are endothelium-derived vasoconstrictor peptides. This Oryctolagus cuniculus (Rabbit) protein is Endothelin-2 (EDN2).